Here is a 1078-residue protein sequence, read N- to C-terminus: Teashirt homolog 1-A (1078 aa).

Disordered regions lie at residues 1–110 (MPRR…NVSY), 140–197 (KSNE…SNSA), and 271–300 (GHYR…MEME). Acidic residues predominate over residues 26–36 (IEEDNLEDDGL). Positions 57-71 (PSYQNSPISSATNQD) are enriched in polar residues. Residues 143–197 (ENSSPTTNTNKSSMSEATGSTSDPDTPTTIPSSSCTNTSTSISVTTSNSTNSNSA) are compositionally biased toward low complexity. C2H2-type zinc fingers lie at residues 248–272 (FKCK…ETGH) and 309–333 (LKCM…KTKH). Over residues 271 to 286 (GHYRDDNKDRDAERTK) the composition is skewed to basic and acidic residues. A disordered region spans residues 365–394 (DSPEQAGISPGASVSESAKDPKAANPYVTP). The C2H2-type 3 zinc finger occupies 418-442 (LKCMECGSSHDSLQQLTAHMMVTGH). 2 disordered regions span residues 472–524 (LPPT…ENED) and 850–877 (RLTP…EAMD). The segment covering 497–524 (HSEEKKDPEKEKVNNCEVEKRIKEENED) has biased composition (basic and acidic residues). Positions 853 to 862 (PKSSTPSTVS) are enriched in polar residues. The homeobox DNA-binding region spans 885 to 955 (RKGRQSNWNP…NVKYQLRRTG (71 aa)). 2 C2H2-type zinc fingers span residues 970–992 (FFCN…LETH) and 1038–1061 (FQCK…SKTH).

The protein belongs to the teashirt C2H2-type zinc-finger protein family.

The protein localises to the nucleus. Functionally, probable transcriptional regulator involved in developmental processes. May act as a transcriptional repressor (Potential). Involved in two major neuronal regionalization processes: primary anteroposterior (AP) axis patterning of the CNS and segmentation of the cranial neuronal crest (CNS) development. In Xenopus laevis (African clawed frog), this protein is Teashirt homolog 1-A (tshz1-a).